Consider the following 376-residue polypeptide: Queuine tRNA-ribosyltransferase (376 aa).

The active-site Proton acceptor is the D90. Residues 90–94 (DSGGF), D144, Q193, and G220 contribute to the substrate site. The tract at residues 251–257 (GVGTPED) is RNA binding. The Nucleophile role is filled by D270. The interval 275–279 (TRNAR) is RNA binding; important for wobble base 34 recognition. 4 residues coordinate Zn(2+): C308, C310, C313, and H339.

The protein belongs to the queuine tRNA-ribosyltransferase family. Homodimer. Within each dimer, one monomer is responsible for RNA recognition and catalysis, while the other monomer binds to the replacement base PreQ1. It depends on Zn(2+) as a cofactor.

The enzyme catalyses 7-aminomethyl-7-carbaguanine + guanosine(34) in tRNA = 7-aminomethyl-7-carbaguanosine(34) in tRNA + guanine. Its pathway is tRNA modification; tRNA-queuosine biosynthesis. Catalyzes the base-exchange of a guanine (G) residue with the queuine precursor 7-aminomethyl-7-deazaguanine (PreQ1) at position 34 (anticodon wobble position) in tRNAs with GU(N) anticodons (tRNA-Asp, -Asn, -His and -Tyr). Catalysis occurs through a double-displacement mechanism. The nucleophile active site attacks the C1' of nucleotide 34 to detach the guanine base from the RNA, forming a covalent enzyme-RNA intermediate. The proton acceptor active site deprotonates the incoming PreQ1, allowing a nucleophilic attack on the C1' of the ribose to form the product. After dissociation, two additional enzymatic reactions on the tRNA convert PreQ1 to queuine (Q), resulting in the hypermodified nucleoside queuosine (7-(((4,5-cis-dihydroxy-2-cyclopenten-1-yl)amino)methyl)-7-deazaguanosine). This Cupriavidus pinatubonensis (strain JMP 134 / LMG 1197) (Cupriavidus necator (strain JMP 134)) protein is Queuine tRNA-ribosyltransferase.